Reading from the N-terminus, the 312-residue chain is Ribosomal RNA small subunit methyltransferase H (312 aa).

A disordered region spans residues 1-24; the sequence is MNIMTANQGAVSPSQTESEASPPT. Residues 55–57, D72, Y96, D117, and Q124 each bind S-adenosyl-L-methionine; that span reads AGH. A disordered region spans residues 288–312; the sequence is EQVDNPRARSAKLRVGERAAAPEGS.

This sequence belongs to the methyltransferase superfamily. RsmH family.

Its subcellular location is the cytoplasm. It catalyses the reaction cytidine(1402) in 16S rRNA + S-adenosyl-L-methionine = N(4)-methylcytidine(1402) in 16S rRNA + S-adenosyl-L-homocysteine + H(+). In terms of biological role, specifically methylates the N4 position of cytidine in position 1402 (C1402) of 16S rRNA. The polypeptide is Ribosomal RNA small subunit methyltransferase H (Deinococcus radiodurans (strain ATCC 13939 / DSM 20539 / JCM 16871 / CCUG 27074 / LMG 4051 / NBRC 15346 / NCIMB 9279 / VKM B-1422 / R1)).